The chain runs to 243 residues: tRNA (guanine-N(1)-)-methyltransferase (243 aa).

Residues G112 and L131–L136 contribute to the S-adenosyl-L-methionine site.

It belongs to the RNA methyltransferase TrmD family. Homodimer.

The protein resides in the cytoplasm. The enzyme catalyses guanosine(37) in tRNA + S-adenosyl-L-methionine = N(1)-methylguanosine(37) in tRNA + S-adenosyl-L-homocysteine + H(+). Specifically methylates guanosine-37 in various tRNAs. This chain is tRNA (guanine-N(1)-)-methyltransferase, found in Leuconostoc mesenteroides subsp. mesenteroides (strain ATCC 8293 / DSM 20343 / BCRC 11652 / CCM 1803 / JCM 6124 / NCDO 523 / NBRC 100496 / NCIMB 8023 / NCTC 12954 / NRRL B-1118 / 37Y).